Here is a 469-residue protein sequence, read N- to C-terminus: 6-phosphofructo-2-kinase/fructose-2,6-bisphosphatase 4 (469 aa).

Positions methionine 1–proline 249 are 6-phosphofructo-2-kinase. Position 46 to 54 (glycine 46 to tyrosine 54) interacts with ATP. 2 residues coordinate beta-D-fructose 6-phosphate: arginine 79 and arginine 103. Residue aspartate 129 is part of the active site. Beta-D-fructose 6-phosphate contacts are provided by threonine 131 and arginine 137. Residue cysteine 159 is part of the active site. Asparagine 168 to lysine 173 provides a ligand contact to ATP. 3 residues coordinate beta-D-fructose 6-phosphate: lysine 173, arginine 194, and tyrosine 198. The segment at arginine 250 to glutamine 469 is fructose-2,6-bisphosphatase. Arginine 256 contacts beta-D-fructose 2,6-bisphosphate. Histidine 257 serves as the catalytic Tele-phosphohistidine intermediate. Asparagine 263, glycine 269, and arginine 306 together coordinate beta-D-fructose 2,6-bisphosphate. Catalysis depends on glutamate 326, which acts as the Proton donor/acceptor. 6 residues coordinate beta-D-fructose 2,6-bisphosphate: tyrosine 337, arginine 351, lysine 355, tyrosine 366, glutamine 392, and arginine 396. Phenylalanine 348–arginine 351 serves as a coordination point for ATP. Residues glutamine 392 to arginine 396 and tyrosine 428 each bind ATP. Threonine 444 bears the Phosphothreonine; by PKC mark.

In the C-terminal section; belongs to the phosphoglycerate mutase family. As to quaternary structure, homodimer.

The catalysed reaction is beta-D-fructose 2,6-bisphosphate + H2O = beta-D-fructose 6-phosphate + phosphate. It carries out the reaction beta-D-fructose 6-phosphate + ATP = beta-D-fructose 2,6-bisphosphate + ADP + H(+). With respect to regulation, the most important regulatory mechanism of these opposing activities is by phosphorylation and dephosphorylation of the enzyme. Synthesis and degradation of fructose 2,6-bisphosphate. The chain is 6-phosphofructo-2-kinase/fructose-2,6-bisphosphatase 4 (PFKFB4) from Homo sapiens (Human).